The primary structure comprises 444 residues: Cell division cycle 20.4, cofactor of APC complex (444 aa).

Positions 88-99 (LLSTNHSDSPHQ) are enriched in polar residues. The tract at residues 88 to 108 (LLSTNHSDSPHQNPKPVKPRR) is disordered. 7 WD repeats span residues 124 to 161 (RDDF…TSEL), 166 to 205 (EDKG…QVRT), 209 to 246 (GHES…SIVE), 250 to 289 (GHTE…SKQT), 298 to 340 (EHTA…CLNS), 342 to 383 (ETGS…KMAE), and 386 to 425 (GHTS…PKTT).

Belongs to the WD repeat CDC20/Fizzy family. The APC/C is composed of at least 11 subunits that stay tightly associated throughout the cell cycle.

The protein localises to the cytoplasm. It functions in the pathway protein modification; protein ubiquitination. Component of the anaphase promoting complex/cyclosome (APC/C), a cell cycle-regulated E3 ubiquitin-protein ligase complex that controls progression through mitosis and the G1 phase of the cell cycle. The chain is Cell division cycle 20.4, cofactor of APC complex (CDC20-4) from Arabidopsis thaliana (Mouse-ear cress).